The chain runs to 340 residues: Ferrochelatase (340 aa).

Fe cation is bound by residues histidine 189 and glutamate 292.

This sequence belongs to the ferrochelatase family.

It is found in the cytoplasm. It catalyses the reaction heme b + 2 H(+) = protoporphyrin IX + Fe(2+). It participates in porphyrin-containing compound metabolism; protoheme biosynthesis; protoheme from protoporphyrin-IX: step 1/1. In terms of biological role, catalyzes the ferrous insertion into protoporphyrin IX. The sequence is that of Ferrochelatase from Pseudomonas aeruginosa (strain LESB58).